The following is a 320-amino-acid chain: Acetyl-coenzyme A carboxylase carboxyl transferase subunit alpha (320 aa).

Residues 42-295 enclose the CoA carboxyltransferase C-terminal domain; the sequence is IEEKALAALT…GDAIAKSFAD (254 aa).

The protein belongs to the AccA family. As to quaternary structure, acetyl-CoA carboxylase is a heterohexamer composed of biotin carboxyl carrier protein (AccB), biotin carboxylase (AccC) and two subunits each of ACCase subunit alpha (AccA) and ACCase subunit beta (AccD).

Its subcellular location is the cytoplasm. The catalysed reaction is N(6)-carboxybiotinyl-L-lysyl-[protein] + acetyl-CoA = N(6)-biotinyl-L-lysyl-[protein] + malonyl-CoA. The protein operates within lipid metabolism; malonyl-CoA biosynthesis; malonyl-CoA from acetyl-CoA: step 1/1. Component of the acetyl coenzyme A carboxylase (ACC) complex. First, biotin carboxylase catalyzes the carboxylation of biotin on its carrier protein (BCCP) and then the CO(2) group is transferred by the carboxyltransferase to acetyl-CoA to form malonyl-CoA. In Rhodopseudomonas palustris (strain BisA53), this protein is Acetyl-coenzyme A carboxylase carboxyl transferase subunit alpha.